Reading from the N-terminus, the 229-residue chain is 3,4-dihydroxy-2-butanone 4-phosphate synthase (229 aa).

D-ribulose 5-phosphate contacts are provided by residues 28–29 (RE), Asp-33, 164–168 (RGGHT), and Glu-188. Residue Glu-29 coordinates Mg(2+). His-167 contributes to the Mg(2+) binding site.

The protein belongs to the DHBP synthase family. As to quaternary structure, homodimer. Requires Mg(2+) as cofactor. Mn(2+) is required as a cofactor.

It catalyses the reaction D-ribulose 5-phosphate = (2S)-2-hydroxy-3-oxobutyl phosphate + formate + H(+). It participates in cofactor biosynthesis; riboflavin biosynthesis; 2-hydroxy-3-oxobutyl phosphate from D-ribulose 5-phosphate: step 1/1. Its function is as follows. Catalyzes the conversion of D-ribulose 5-phosphate to formate and 3,4-dihydroxy-2-butanone 4-phosphate. This Methanothermobacter thermautotrophicus (strain ATCC 29096 / DSM 1053 / JCM 10044 / NBRC 100330 / Delta H) (Methanobacterium thermoautotrophicum) protein is 3,4-dihydroxy-2-butanone 4-phosphate synthase.